The sequence spans 81 residues: ATP synthase subunit c, chloroplastic (81 aa).

The next 2 membrane-spanning stretches (helical) occupy residues 7–27 (AASV…PGIG) and 57–77 (LAFM…LLFA).

This sequence belongs to the ATPase C chain family. F-type ATPases have 2 components, F(1) - the catalytic core - and F(0) - the membrane proton channel. F(1) has five subunits: alpha(3), beta(3), gamma(1), delta(1), epsilon(1). F(0) has four main subunits: a(1), b(1), b'(1) and c(10-14). The alpha and beta chains form an alternating ring which encloses part of the gamma chain. F(1) is attached to F(0) by a central stalk formed by the gamma and epsilon chains, while a peripheral stalk is formed by the delta, b and b' chains.

It is found in the plastid. It localises to the chloroplast thylakoid membrane. F(1)F(0) ATP synthase produces ATP from ADP in the presence of a proton or sodium gradient. F-type ATPases consist of two structural domains, F(1) containing the extramembraneous catalytic core and F(0) containing the membrane proton channel, linked together by a central stalk and a peripheral stalk. During catalysis, ATP synthesis in the catalytic domain of F(1) is coupled via a rotary mechanism of the central stalk subunits to proton translocation. Functionally, key component of the F(0) channel; it plays a direct role in translocation across the membrane. A homomeric c-ring of between 10-14 subunits forms the central stalk rotor element with the F(1) delta and epsilon subunits. The sequence is that of ATP synthase subunit c, chloroplastic from Staurastrum punctulatum (Green alga).